The primary structure comprises 457 residues: Fibrinogen C domain-containing protein 1 (457 aa).

Positions Met-1 to Gln-20 are disordered. Topologically, residues Met-1–Cys-33 are cytoplasmic. A helical; Signal-anchor for type II membrane protein transmembrane segment spans residues Thr-34–Met-54. Residues Asn-55–Asn-457 lie on the Extracellular side of the membrane. The tract at residues Arg-211 to Ser-235 is disordered. In terms of domain architecture, Fibrinogen C-terminal spans Cys-231–Arg-454. A glycan (N-linked (GlcNAc...) asparagine) is linked at Asn-233. Cys-240 and Cys-269 are joined by a disulfide. Residue Asn-336 is glycosylated (N-linked (GlcNAc...) asparagine). Ca(2+) is bound by residues Asp-389 and Asp-391. Cys-397 and Cys-410 are joined by a disulfide.

As to quaternary structure, homotetramer; disulfide-linked.

The protein localises to the membrane. In terms of biological role, acetyl group-binding receptor which shows a calcium-dependent binding to acetylated structures such as chitin, some N-acetylated carbohydrates, and amino acids. This chain is Fibrinogen C domain-containing protein 1 (fibcd1), found in Xenopus tropicalis (Western clawed frog).